A 355-amino-acid polypeptide reads, in one-letter code: Aurora kinase (355 aa).

The region spanning 89–340 (FEIGKPLGKG…LEQVMRHPWI (252 aa)) is the Protein kinase domain. ATP contacts are provided by residues 95–103 (LGKGKFGRV) and lysine 118. Catalysis depends on aspartate 212, which acts as the Proton acceptor.

It belongs to the protein kinase superfamily. Ser/Thr protein kinase family. Aurora subfamily. In terms of assembly, component of the CPC complex at least composed of ark1, bir1 and pic1. Interacts with the mitotic checkpoint complex (MCC) subunit mad3.

The protein resides in the nucleus. It is found in the cytoplasm. It localises to the cytoskeleton. Its subcellular location is the spindle. The enzyme catalyses L-seryl-[protein] + ATP = O-phospho-L-seryl-[protein] + ADP + H(+). The catalysed reaction is L-threonyl-[protein] + ATP = O-phospho-L-threonyl-[protein] + ADP + H(+). Its function is as follows. Component of the chromosomal passenger complex (CPC), a complex that acts as a key regulator of chromosome segregation and cytokinesis. Has a role in error-correction of aberrent kinetochore-microtubule attachments to ensure that sister kinetochores become bioriented and connect to opposite poles by promoting spindle assembly checkpoint signaling. Ark1 is also required for phosphorylation of histone H3 that accompanies chromosome condensation and condensin recruitment to mitotic chromatin. The chain is Aurora kinase (ark1) from Schizosaccharomyces pombe (strain 972 / ATCC 24843) (Fission yeast).